The following is a 200-amino-acid chain: Imidazoleglycerol-phosphate dehydratase (200 aa).

Belongs to the imidazoleglycerol-phosphate dehydratase family.

It is found in the cytoplasm. The enzyme catalyses D-erythro-1-(imidazol-4-yl)glycerol 3-phosphate = 3-(imidazol-4-yl)-2-oxopropyl phosphate + H2O. The protein operates within amino-acid biosynthesis; L-histidine biosynthesis; L-histidine from 5-phospho-alpha-D-ribose 1-diphosphate: step 6/9. This chain is Imidazoleglycerol-phosphate dehydratase, found in Prosthecochloris aestuarii (strain DSM 271 / SK 413).